The sequence spans 588 residues: Adenine deaminase (588 aa).

This sequence belongs to the metallo-dependent hydrolases superfamily. Adenine deaminase family. Homodimer. Mn(2+) serves as cofactor.

The catalysed reaction is adenine + H2O + H(+) = hypoxanthine + NH4(+). The polypeptide is Adenine deaminase (Escherichia coli O139:H28 (strain E24377A / ETEC)).